The sequence spans 545 residues: DNA mismatch repair protein MutL (545 aa).

The segment at 517–545 is disordered; it reads RRSGARGGGEARPRPQEESFPEAPLPREP.

The protein belongs to the DNA mismatch repair MutL/HexB family.

This protein is involved in the repair of mismatches in DNA. It is required for dam-dependent methyl-directed DNA mismatch repair. May act as a 'molecular matchmaker', a protein that promotes the formation of a stable complex between two or more DNA-binding proteins in an ATP-dependent manner without itself being part of a final effector complex. The protein is DNA mismatch repair protein MutL of Thermus thermophilus (strain ATCC 27634 / DSM 579 / HB8).